The sequence spans 394 residues: S-adenosylmethionine synthase (394 aa).

Residue His-16 coordinates ATP. Asp-18 is a binding site for Mg(2+). Glu-44 provides a ligand contact to K(+). Positions 57 and 99 each coordinate L-methionine. The flexible loop stretch occupies residues 99 to 109 (QSPDIAQGVDE). Residues 173–175 (DAK), 240–241 (RF), Asp-249, 255–256 (RK), Ala-272, and Lys-276 contribute to the ATP site. Asp-249 contacts L-methionine. L-methionine is bound at residue Lys-280.

The protein belongs to the AdoMet synthase family. Homotetramer; dimer of dimers. Mg(2+) is required as a cofactor. Requires K(+) as cofactor.

Its subcellular location is the cytoplasm. It carries out the reaction L-methionine + ATP + H2O = S-adenosyl-L-methionine + phosphate + diphosphate. The protein operates within amino-acid biosynthesis; S-adenosyl-L-methionine biosynthesis; S-adenosyl-L-methionine from L-methionine: step 1/1. Its function is as follows. Catalyzes the formation of S-adenosylmethionine (AdoMet) from methionine and ATP. The overall synthetic reaction is composed of two sequential steps, AdoMet formation and the subsequent tripolyphosphate hydrolysis which occurs prior to release of AdoMet from the enzyme. The sequence is that of S-adenosylmethionine synthase from Lacticaseibacillus paracasei (strain ATCC 334 / BCRC 17002 / CCUG 31169 / CIP 107868 / KCTC 3260 / NRRL B-441) (Lactobacillus paracasei).